Consider the following 121-residue polypeptide: Small ribosomal subunit protein uS13 (121 aa).

Residues 92 to 121 (RKGLPVRGQSSKTNARTVKGPRKTVANKKK) are disordered. Residues 110–121 (KGPRKTVANKKK) are compositionally biased toward basic residues.

The protein belongs to the universal ribosomal protein uS13 family. In terms of assembly, part of the 30S ribosomal subunit. Forms a loose heterodimer with protein S19. Forms two bridges to the 50S subunit in the 70S ribosome.

Located at the top of the head of the 30S subunit, it contacts several helices of the 16S rRNA. In the 70S ribosome it contacts the 23S rRNA (bridge B1a) and protein L5 of the 50S subunit (bridge B1b), connecting the 2 subunits; these bridges are implicated in subunit movement. Contacts the tRNAs in the A and P-sites. The polypeptide is Small ribosomal subunit protein uS13 (Mycoplasma mycoides subsp. mycoides SC (strain CCUG 32753 / NCTC 10114 / PG1)).